A 204-amino-acid polypeptide reads, in one-letter code: E3 ubiquitin-protein ligase MPSR1 (204 aa).

An RING-type; atypical zinc finger spans residues C113 to R154.

Autoubiquitinated.

The protein resides in the cytoplasm. The enzyme catalyses S-ubiquitinyl-[E2 ubiquitin-conjugating enzyme]-L-cysteine + [acceptor protein]-L-lysine = [E2 ubiquitin-conjugating enzyme]-L-cysteine + N(6)-ubiquitinyl-[acceptor protein]-L-lysine.. Its function is as follows. E3 ubiquitin-protein ligase involved in protein quality control (PQC) under proteotoxic stress. Is essential to plant survival under proteotoxic stress. Functions by removing damaged proteins before they form cytotoxic aggregates. Recognizes misfolded proteins selectively and tethers polyubiquitin chains to the proteins directly for subsequent degradation by the 26S proteasome pathway. Targets misfolded proteins independently of cytoplasmic chaperones. Associates with the 26S proteasome and sustains the structural integrity of the proteasome complex at the initial stage of proteotoxic stress. Under normal conditions, MPSR1 becomes highly unstable by its autoubiquitination activity and is stabilized during proteotoxic stress by conjugating ubiquitins on misfolded proteins. The protein is E3 ubiquitin-protein ligase MPSR1 of Arabidopsis thaliana (Mouse-ear cress).